The sequence spans 134 residues: ATP synthase epsilon chain (134 aa).

Belongs to the ATPase epsilon chain family. In terms of assembly, F-type ATPases have 2 components, CF(1) - the catalytic core - and CF(0) - the membrane proton channel. CF(1) has five subunits: alpha(3), beta(3), gamma(1), delta(1), epsilon(1). CF(0) has three main subunits: a, b and c.

The protein localises to the cell membrane. Produces ATP from ADP in the presence of a proton gradient across the membrane. This Priestia megaterium (strain ATCC 12872 / QMB1551) (Bacillus megaterium) protein is ATP synthase epsilon chain (atpC).